The primary structure comprises 421 residues: Imidazolonepropionase (421 aa).

Fe(3+) is bound by residues histidine 81 and histidine 83. Zn(2+)-binding residues include histidine 81 and histidine 83. Residues arginine 90, tyrosine 153, and histidine 186 each coordinate 4-imidazolone-5-propanoate. Tyrosine 153 lines the N-formimidoyl-L-glutamate pocket. Residue histidine 251 participates in Fe(3+) binding. Histidine 251 contributes to the Zn(2+) binding site. Glutamate 254 is a 4-imidazolone-5-propanoate binding site. Aspartate 326 is a binding site for Fe(3+). Position 326 (aspartate 326) interacts with Zn(2+). N-formimidoyl-L-glutamate is bound by residues asparagine 328 and glycine 330. A 4-imidazolone-5-propanoate-binding site is contributed by serine 331.

The protein belongs to the metallo-dependent hydrolases superfamily. HutI family. The cofactor is Zn(2+). Fe(3+) serves as cofactor.

The protein localises to the cytoplasm. It carries out the reaction 4-imidazolone-5-propanoate + H2O = N-formimidoyl-L-glutamate. It functions in the pathway amino-acid degradation; L-histidine degradation into L-glutamate; N-formimidoyl-L-glutamate from L-histidine: step 3/3. In terms of biological role, catalyzes the hydrolytic cleavage of the carbon-nitrogen bond in imidazolone-5-propanoate to yield N-formimidoyl-L-glutamate. It is the third step in the universal histidine degradation pathway. The protein is Imidazolonepropionase of Streptococcus pyogenes serotype M6 (strain ATCC BAA-946 / MGAS10394).